A 228-amino-acid chain; its full sequence is Ribose-5-phosphate isomerase A (228 aa).

Residues Thr-32–Thr-35, Asp-85–Asp-88, and Lys-98–Gly-101 contribute to the substrate site. Residue Glu-107 is the Proton acceptor of the active site. Lys-125 lines the substrate pocket.

The protein belongs to the ribose 5-phosphate isomerase family. As to quaternary structure, homodimer.

The enzyme catalyses aldehydo-D-ribose 5-phosphate = D-ribulose 5-phosphate. It participates in carbohydrate degradation; pentose phosphate pathway; D-ribose 5-phosphate from D-ribulose 5-phosphate (non-oxidative stage): step 1/1. Its function is as follows. Catalyzes the reversible conversion of ribose-5-phosphate to ribulose 5-phosphate. This chain is Ribose-5-phosphate isomerase A, found in Cupriavidus taiwanensis (strain DSM 17343 / BCRC 17206 / CCUG 44338 / CIP 107171 / LMG 19424 / R1) (Ralstonia taiwanensis (strain LMG 19424)).